Consider the following 130-residue polypeptide: Lysozyme C, kidney isozyme (130 aa).

The region spanning 1–130 (KVFERCELAR…LTSYIQGCGV (130 aa)) is the C-type lysozyme domain. 4 cysteine pairs are disulfide-bonded: C6–C128, C30–C116, C65–C81, and C77–C95. Catalysis depends on residues E35 and D53.

Belongs to the glycosyl hydrolase 22 family. Monomer.

It is found in the secreted. The enzyme catalyses Hydrolysis of (1-&gt;4)-beta-linkages between N-acetylmuramic acid and N-acetyl-D-glucosamine residues in a peptidoglycan and between N-acetyl-D-glucosamine residues in chitodextrins.. Its function is as follows. Lysozymes have primarily a bacteriolytic function; those in tissues and body fluids are associated with the monocyte-macrophage system and enhance the activity of immunoagents. The protein is Lysozyme C, kidney isozyme of Ovis aries (Sheep).